A 209-amino-acid polypeptide reads, in one-letter code: ATP-dependent Clp protease proteolytic subunit 1 (209 aa).

S109 (nucleophile) is an active-site residue. Residue H134 is part of the active site.

It belongs to the peptidase S14 family. As to quaternary structure, fourteen ClpP subunits assemble into 2 heptameric rings which stack back to back to give a disk-like structure with a central cavity, resembling the structure of eukaryotic proteasomes.

The protein resides in the cytoplasm. It carries out the reaction Hydrolysis of proteins to small peptides in the presence of ATP and magnesium. alpha-casein is the usual test substrate. In the absence of ATP, only oligopeptides shorter than five residues are hydrolyzed (such as succinyl-Leu-Tyr-|-NHMec, and Leu-Tyr-Leu-|-Tyr-Trp, in which cleavage of the -Tyr-|-Leu- and -Tyr-|-Trp bonds also occurs).. In terms of biological role, cleaves peptides in various proteins in a process that requires ATP hydrolysis. Has a chymotrypsin-like activity. Plays a major role in the degradation of misfolded proteins. In Corynebacterium diphtheriae (strain ATCC 700971 / NCTC 13129 / Biotype gravis), this protein is ATP-dependent Clp protease proteolytic subunit 1.